Consider the following 252-residue polypeptide: Ribosomal RNA small subunit methyltransferase J (252 aa).

Residues 126–127 (ER) and D176 each bind S-adenosyl-L-methionine.

This sequence belongs to the methyltransferase superfamily. RsmJ family.

The protein localises to the cytoplasm. The catalysed reaction is guanosine(1516) in 16S rRNA + S-adenosyl-L-methionine = N(2)-methylguanosine(1516) in 16S rRNA + S-adenosyl-L-homocysteine + H(+). Functionally, specifically methylates the guanosine in position 1516 of 16S rRNA. This is Ribosomal RNA small subunit methyltransferase J from Bdellovibrio bacteriovorus (strain ATCC 15356 / DSM 50701 / NCIMB 9529 / HD100).